We begin with the raw amino-acid sequence, 416 residues long: Pigment epithelium-derived factor (416 aa).

Positions 1–20 are cleaved as a signal peptide; the sequence is MQALVLLLWTGALLGFGRCQ. Residues S112 and S225 each carry the phosphoserine modification. An N-linked (GlcNAc...) asparagine glycan is attached at N283.

It belongs to the serpin family. As to quaternary structure, interacts with PNPLA2; this interaction stimulates the phospholipase A2 activity of PNPLA2. In terms of tissue distribution, retinal pigment epithelial cells. Located in the interphotoreceptor matrix (IPM) which is between the retinal pigment epithelium and the neural retina.

The protein resides in the secreted. It localises to the melanosome. Neurotrophic protein; induces extensive neuronal differentiation in retinoblastoma cells. Potent inhibitor of angiogenesis. As it does not undergo the S (stressed) to R (relaxed) conformational transition characteristic of active serpins, it exhibits no serine protease inhibitory activity. The chain is Pigment epithelium-derived factor (SERPINF1) from Bos taurus (Bovine).